The chain runs to 259 residues: Proteasome subunit alpha type-7 (259 aa).

Belongs to the peptidase T1A family. In terms of assembly, the 26S proteasome consists of a 20S proteasome core and two 19S regulatory subunits. The 20S proteasome core is composed of 28 subunits that are arranged in four stacked rings, resulting in a barrel-shaped structure. The two end rings are each formed by seven alpha subunits, and the two central rings are each formed by seven beta subunits. The catalytic chamber with the active sites is on the inside of the barrel.

It localises to the cytoplasm. The protein resides in the nucleus. The proteasome is a multicatalytic proteinase complex which is characterized by its ability to cleave peptides with Arg, Phe, Tyr, Leu, and Glu adjacent to the leaving group at neutral or slightly basic pH. The proteasome has an ATP-dependent proteolytic activity. The sequence is that of Proteasome subunit alpha type-7 (PAD1) from Solanum lycopersicum (Tomato).